The following is a 176-amino-acid chain: Adenylyl-sulfate kinase (176 aa).

Residue 12-19 (GLSGAGKS) coordinates ATP. Ser-86 (phosphoserine intermediate) is an active-site residue.

Belongs to the APS kinase family.

It catalyses the reaction adenosine 5'-phosphosulfate + ATP = 3'-phosphoadenylyl sulfate + ADP + H(+). It functions in the pathway sulfur metabolism; hydrogen sulfide biosynthesis; sulfite from sulfate: step 2/3. Catalyzes the synthesis of activated sulfate. The protein is Adenylyl-sulfate kinase of Gloeothece citriformis (strain PCC 7424) (Cyanothece sp. (strain PCC 7424)).